The sequence spans 298 residues: Short-chain dehydrogenase/reductase prx6 (298 aa).

NADP(+) is bound by residues isoleucine 27, aspartate 70, asparagine 97, tyrosine 174, lysine 178, valine 208, and threonine 210. The Proton acceptor role is filled by tyrosine 174. Lysine 178 serves as the catalytic Lowers pKa of active site Tyr.

It belongs to the short-chain dehydrogenases/reductases (SDR) family.

It participates in sesquiterpene biosynthesis. Short-chain dehydrogenase/reductase; part of the gene cluster that mediates the biosynthesis of PR-toxin, a bicyclic sesquiterpene belonging to the eremophilane class and acting as a mycotoxin. The first step of the pathway is catalyzed by the aristolochene synthase which performs the cyclization of trans,trans-farnesyl diphosphate (FPP) to the bicyclic sesquiterpene aristolochene. Following the formation of aristolochene, the non-oxygenated aristolochene is converted to the trioxygenated intermediate eremofortin B, via 7-epi-neopetasone. This conversion appears to involve three enzymes, a hydroxysterol oxidase-like enzyme, the quinone-oxidase prx3 that forms the quinone-type-structure in the bicyclic nucleus of aristolochene with the C8-oxo group and the C-3 hydroxyl group, and the P450 monooxygenase prx9 that introduces the epoxide at the double bond between carbons 1 and 2. No monoxy or dioxy-intermediates have been reported to be released to the broth, so these three early oxidative reactions may be coupled together. Eremofortin B is further oxidized by another P450 monooxygenase, that introduces a second epoxide between carbons 7 and 11 prior to acetylation to eremofortin A by the acetyltransferase prx11. The second epoxidation may be performed by a second P450 monooxygenase. After the acetylation step, eremofortin A is converted to eremofortin C and then to PR-toxin. First the conversion of eremofortin A to eremofortin C proceeds by oxidation of the side chain of the molecule at C-12 and is catalyzed by the short-chain oxidoreductase prx1. The cytochrome P450 monooxygenase prx8 also plays a role in this step. The primary alcohol formed at C-12 is finally oxidized by the short-chain alcohol dehydrogenase prx4 that forms PR-toxin. The polypeptide is Short-chain dehydrogenase/reductase prx6 (Penicillium rubens (strain ATCC 28089 / DSM 1075 / NRRL 1951 / Wisconsin 54-1255) (Penicillium chrysogenum)).